Consider the following 227-residue polypeptide: Phosphoribosylformylglycinamidine synthase subunit PurQ (227 aa).

In terms of domain architecture, Glutamine amidotransferase type-1 spans 3–225 (FAVIVLPGSN…VKNWRDTHVT (223 aa)). Cys-86 (nucleophile) is an active-site residue. Active-site residues include His-194 and Glu-196.

As to quaternary structure, part of the FGAM synthase complex composed of 1 PurL, 1 PurQ and 2 PurS subunits.

Its subcellular location is the cytoplasm. The catalysed reaction is N(2)-formyl-N(1)-(5-phospho-beta-D-ribosyl)glycinamide + L-glutamine + ATP + H2O = 2-formamido-N(1)-(5-O-phospho-beta-D-ribosyl)acetamidine + L-glutamate + ADP + phosphate + H(+). The enzyme catalyses L-glutamine + H2O = L-glutamate + NH4(+). Its pathway is purine metabolism; IMP biosynthesis via de novo pathway; 5-amino-1-(5-phospho-D-ribosyl)imidazole from N(2)-formyl-N(1)-(5-phospho-D-ribosyl)glycinamide: step 1/2. Functionally, part of the phosphoribosylformylglycinamidine synthase complex involved in the purines biosynthetic pathway. Catalyzes the ATP-dependent conversion of formylglycinamide ribonucleotide (FGAR) and glutamine to yield formylglycinamidine ribonucleotide (FGAM) and glutamate. The FGAM synthase complex is composed of three subunits. PurQ produces an ammonia molecule by converting glutamine to glutamate. PurL transfers the ammonia molecule to FGAR to form FGAM in an ATP-dependent manner. PurS interacts with PurQ and PurL and is thought to assist in the transfer of the ammonia molecule from PurQ to PurL. The protein is Phosphoribosylformylglycinamidine synthase subunit PurQ of Bacillus pumilus (strain SAFR-032).